The primary structure comprises 872 residues: Alanine--tRNA ligase (872 aa).

The Zn(2+) site is built by His-567, His-571, Cys-669, and His-673.

This sequence belongs to the class-II aminoacyl-tRNA synthetase family. The cofactor is Zn(2+).

It localises to the cytoplasm. It carries out the reaction tRNA(Ala) + L-alanine + ATP = L-alanyl-tRNA(Ala) + AMP + diphosphate. In terms of biological role, catalyzes the attachment of alanine to tRNA(Ala) in a two-step reaction: alanine is first activated by ATP to form Ala-AMP and then transferred to the acceptor end of tRNA(Ala). Also edits incorrectly charged Ser-tRNA(Ala) and Gly-tRNA(Ala) via its editing domain. The sequence is that of Alanine--tRNA ligase from Streptococcus pyogenes serotype M4 (strain MGAS10750).